The chain runs to 429 residues: Methylenetetrahydrofolate--tRNA-(uracil-5-)-methyltransferase TrmFO (429 aa).

Position 7–12 (7–12 (GAGLAG)) interacts with FAD.

The protein belongs to the MnmG family. TrmFO subfamily. FAD serves as cofactor.

Its subcellular location is the cytoplasm. It carries out the reaction uridine(54) in tRNA + (6R)-5,10-methylene-5,6,7,8-tetrahydrofolate + NADH + H(+) = 5-methyluridine(54) in tRNA + (6S)-5,6,7,8-tetrahydrofolate + NAD(+). It catalyses the reaction uridine(54) in tRNA + (6R)-5,10-methylene-5,6,7,8-tetrahydrofolate + NADPH + H(+) = 5-methyluridine(54) in tRNA + (6S)-5,6,7,8-tetrahydrofolate + NADP(+). Its function is as follows. Catalyzes the folate-dependent formation of 5-methyl-uridine at position 54 (M-5-U54) in all tRNAs. This chain is Methylenetetrahydrofolate--tRNA-(uracil-5-)-methyltransferase TrmFO, found in Thermosipho africanus (strain TCF52B).